The chain runs to 371 residues: Protein SPATA31F3 (371 aa).

A helical transmembrane segment spans residues 7–29; the sequence is ILWDVGSSVYTYGSLFIIALIIW. Residues 62–86 are a coiled coil; that stretch reads LRVKKRTTKEETEKLQKLLSNMKRQ. Polar residues-rich tracts occupy residues 189–203 and 244–266; these read LSKV…LSSQ and PQQQ…SSSS. Disordered regions lie at residues 189–222, 240–299, and 326–371; these read LSKV…STDQ, YHPA…EAEM, and YKSE…KRNI. A phosphoserine mark is found at Ser197 and Ser198. The span at 277 to 287 shows a compositional bias: basic residues; sequence QKKRKKTKKLV. Basic and acidic residues predominate over residues 330-362; that stretch reads TGAKPKTGEPKKSSAKVRAEEPNLEKHAKDLKA.

Belongs to the SPATA31 family.

The protein localises to the membrane. The chain is Protein SPATA31F3 (Spata31f3) from Mus musculus (Mouse).